The sequence spans 212 residues: Uridine kinase (212 aa).

12-19 (GGSGGGKT) contributes to the ATP binding site.

It belongs to the uridine kinase family.

It is found in the cytoplasm. The catalysed reaction is uridine + ATP = UMP + ADP + H(+). It carries out the reaction cytidine + ATP = CMP + ADP + H(+). It functions in the pathway pyrimidine metabolism; CTP biosynthesis via salvage pathway; CTP from cytidine: step 1/3. Its pathway is pyrimidine metabolism; UMP biosynthesis via salvage pathway; UMP from uridine: step 1/1. This chain is Uridine kinase, found in Streptococcus pneumoniae serotype 19F (strain G54).